Here is a 142-residue protein sequence, read N- to C-terminus: Class II hydrophobin 7 (142 aa).

An N-terminal signal peptide occupies residues 1 to 16 (MKFLTVAIVLAAAASA). Cystine bridges form between Cys-73/Cys-123, Cys-84/Cys-114, Cys-85/Cys-97, and Cys-124/Cys-135.

It belongs to the cerato-ulmin hydrophobin family. Homodimer. Homodimers further self-assemble to form highly ordered films at water-air interfaces through intermolecular interactions.

Its subcellular location is the secreted. It localises to the cell wall. Functionally, aerial growth, conidiation, and dispersal of filamentous fungi in the environment rely upon a capability of their secreting small amphipathic proteins called hydrophobins (HPBs) with low sequence identity. Class I can self-assemble into an outermost layer of rodlet bundles on aerial cell surfaces, conferring cellular hydrophobicity that supports fungal growth, development and dispersal; whereas Class II form highly ordered films at water-air interfaces through intermolecular interactions but contribute nothing to the rodlet structure. In Trichoderma asperellum (strain ATCC 204424 / CBS 433.97 / NBRC 101777), this protein is Class II hydrophobin 7.